Consider the following 407-residue polypeptide: Resuscitation-promoting factor RpfA (407 aa).

The N-terminal stretch at 1–33 (MSGRHRKPTTSNVSVAKIAFTGAVLGGGGIAMA) is a signal peptide. 2 disordered regions span residues 142–253 (VNGE…ADLA) and 271–371 (LPAA…AETP). The segment covering 148-159 (PLAPPPADPAPP) has biased composition (pro residues). Residues 160 to 170 (VELAANDLPAP) show a composition bias toward low complexity. Residues 171–193 (LGEPLPAAPADPAPPADLAPPAP) show a composition bias toward pro residues. Repeat copies occupy residues 178–185 (APADPAPP) and 186–193 (ADLAPPAP). The interval 178–359 (APADPAPPAD…PDPQPADAPP (182 aa)) is 12 X 8 AA approximate repeats of A-P-A-D-L-A-P-P. The span at 194–210 (ADVAPPVELAVNDLPAP) shows a compositional bias: low complexity. Residues 211 to 249 (LGEPLPAAPADPAPPADLAPPAPADLAPPAPADLAPPAP) show a composition bias toward pro residues. Tandem repeats lie at residues 218-225 (APADPAPP), 226-233 (ADLAPPAP), 240-247 (APADLAPP), 248-255 (APADLAPP), 274-281 (APAELAPP), 287-294 (ASADLAPP), 295-302 (APADLAPP), 303-310 (APAELAPP), 311-318 (APADLAPP), and 353-359 (QPADAPP). Residues 274–292 (APAELAPPADLAPASADLA) show a composition bias toward low complexity. Composition is skewed to pro residues over residues 293–312 (PPAP…PPAP) and 350–361 (PDPQPADAPPPG).

It belongs to the transglycosylase family. Rpf subfamily.

In terms of biological role, factor that stimulates resuscitation of dormant cells. Has peptidoglycan (PG) hydrolytic activity. This is Resuscitation-promoting factor RpfA (rpfA) from Mycobacterium tuberculosis (strain CDC 1551 / Oshkosh).